We begin with the raw amino-acid sequence, 102 residues long: Small ribosomal subunit protein uS10 (102 aa).

The protein belongs to the universal ribosomal protein uS10 family. As to quaternary structure, part of the 30S ribosomal subunit.

Its function is as follows. Involved in the binding of tRNA to the ribosomes. The chain is Small ribosomal subunit protein uS10 from Caulobacter sp. (strain K31).